We begin with the raw amino-acid sequence, 412 residues long: MKAEIISVGTELLLGDILNTNAQYLSKKLAELGIFLYRQTVVGDNMDRILQAFDEAFKRSELVITTGGLGPTQDDLTKEAAAKFFSKKLVLHKPTLQAIKDYFKGREEYLTEGNLKQAYIPEGAIVLDNFYGTAPGCIIEDSGKILIILPGPPKEMEPMFETAVMPYLMKLQNCVLYSKVLRVFGMGECLVVEKIKEIIENQDNPTIAPYAKEGEVLLRITARADNKELAEGMIAPIEKQIREKLGEYIYGVGEESLEEIVVNLLRKTGLTISTAESCTGGLVASKIVNVAGVSKVFMEGIIAYSNEAKVKRLGVKKETLSKFGAVSEETAIEMASGIAKSAGTDIGLSITGIAGPTGGTPEKPVGLVYLGLYVNGKTAVKKLQLGGDRNKIRNRAAMFALDFVRRALLPLV.

The protein belongs to the CinA family.

This chain is CinA-like protein, found in Kosmotoga olearia (strain ATCC BAA-1733 / DSM 21960 / TBF 19.5.1).